Reading from the N-terminus, the 292-residue chain is Pyruvate formate-lyase 2-activating enzyme (292 aa).

In terms of domain architecture, Radical SAM core spans 33–287 (NDGEGIRTVV…REMAERAGLQ (255 aa)). [4Fe-4S] cluster contacts are provided by cysteine 47, cysteine 51, and cysteine 54. 53–55 (WCA) provides a ligand contact to S-adenosyl-L-methionine. Residues 62–96 (GKIQTVRREAKCLHCAKCLRDADECPSGAFERIGR) form the 4Fe-4S ferredoxin-type domain. Residues glycine 126, 175 to 177 (DLK), and histidine 247 contribute to the S-adenosyl-L-methionine site.

It belongs to the organic radical-activating enzymes family. The cofactor is [4Fe-4S] cluster.

The protein resides in the cytoplasm. It catalyses the reaction glycyl-[formate C-acetyltransferase] + reduced [flavodoxin] + S-adenosyl-L-methionine = glycin-2-yl radical-[formate C-acetyltransferase] + semiquinone [flavodoxin] + 5'-deoxyadenosine + L-methionine + H(+). Its function is as follows. Activation of pyruvate formate-lyase 2 under anaerobic conditions by generation of an organic free radical, using S-adenosylmethionine and reduced flavodoxin as cosubstrates to produce 5'-deoxy-adenosine. The chain is Pyruvate formate-lyase 2-activating enzyme (pflC) from Escherichia coli (strain K12).